A 70-amino-acid polypeptide reads, in one-letter code: Large ribosomal subunit protein eL38 (70 aa).

The protein belongs to the eukaryotic ribosomal protein eL38 family.

The sequence is that of Large ribosomal subunit protein eL38 (RpL38) from Drosophila melanogaster (Fruit fly).